The chain runs to 167 residues: Large ribosomal subunit protein uL10 (167 aa).

It belongs to the universal ribosomal protein uL10 family. As to quaternary structure, part of the ribosomal stalk of the 50S ribosomal subunit. The N-terminus interacts with L11 and the large rRNA to form the base of the stalk. The C-terminus forms an elongated spine to which L12 dimers bind in a sequential fashion forming a multimeric L10(L12)X complex.

In terms of biological role, forms part of the ribosomal stalk, playing a central role in the interaction of the ribosome with GTP-bound translation factors. The polypeptide is Large ribosomal subunit protein uL10 (Streptococcus thermophilus (strain CNRZ 1066)).